A 381-amino-acid chain; its full sequence is Succinyl-diaminopimelate desuccinylase (381 aa).

His72 contacts Zn(2+). The active site involves Asp74. Asp103 provides a ligand contact to Zn(2+). Glu133 serves as the catalytic Proton acceptor. Residues Glu134, Glu163, and His348 each coordinate Zn(2+).

It belongs to the peptidase M20A family. DapE subfamily. As to quaternary structure, homodimer. Zn(2+) serves as cofactor. It depends on Co(2+) as a cofactor.

It carries out the reaction N-succinyl-(2S,6S)-2,6-diaminopimelate + H2O = (2S,6S)-2,6-diaminopimelate + succinate. It participates in amino-acid biosynthesis; L-lysine biosynthesis via DAP pathway; LL-2,6-diaminopimelate from (S)-tetrahydrodipicolinate (succinylase route): step 3/3. Functionally, catalyzes the hydrolysis of N-succinyl-L,L-diaminopimelic acid (SDAP), forming succinate and LL-2,6-diaminopimelate (DAP), an intermediate involved in the bacterial biosynthesis of lysine and meso-diaminopimelic acid, an essential component of bacterial cell walls. This is Succinyl-diaminopimelate desuccinylase from Anaplasma marginale (strain Florida).